The chain runs to 289 residues: Zinc finger matrin-type protein 3 (289 aa).

The tract at residues 1-59 (MILLQHAGLPPPKRPSSSPPMSVAARSTGALQLPPQKPFGQEASLPLAGEEEPPKGGEQ) is disordered. Residues 9–18 (LPPPKRPSSS) show a composition bias toward pro residues. 2 Matrin-type zinc fingers span residues 70–100 (LYCK…KLRN) and 147–177 (DYCK…RLRL). The segment covering 180–191 (AQSNSFSDSSEV) has biased composition (polar residues). The tract at residues 180–200 (AQSNSFSDSSEVGQRRTRKEG) is disordered. Residues 246–276 (FYCSMCNVGAGEEVEFRQHLESKQHKSKVSE) form a Matrin-type 3 zinc finger.

As to quaternary structure, interacts with dsRNA.

Its subcellular location is the nucleus. The protein resides in the nucleolus. Acts as a bona fide target gene of p53/TP53. May play a role in the TP53-dependent growth regulatory pathway. May contribute to TP53-mediated apoptosis by regulation of TP53 expression and translocation to the nucleus and nucleolus. This chain is Zinc finger matrin-type protein 3, found in Bos taurus (Bovine).